The sequence spans 345 residues: MAITYDTYEDLWEHSEVLEGVHEVLSEVAEVDGVPAISEAFLRGIDEDRGHKHVVAMNGDRVAGVLAIDPDRVIELAVAPEVRHSRVGIALFEALRDQLGVSGGIDVWAHGDSAGAQRFVESLDARRTRELLKMSVDCPPATKAAKAMEAGGAEAEKRCAEQDFEVLSYTESVARFDADSVDAEWVRINNEAFAWHPEQGGWDVDYLRSARDTNWFDPDGVLMLWVRDENSAAERVGIPCAANGGEGNDDVFRLVGFHWTKIPLEEKEKDAGERTGEVYVVCLADDARGRGLGQAITQLGMKSLLENGCGRIELYVEGDNAPAVSTYKRLGFEVVHTDVVYRGRL.

N-acetyltransferase domains follow at residues 6 to 149 (DTYE…KAME) and 164 to 345 (FEVL…RGRL). Glu39 lines the 1D-myo-inositol 2-(L-cysteinylamino)-2-deoxy-alpha-D-glucopyranoside pocket. 76-78 (LAV) is an acetyl-CoA binding site. 1D-myo-inositol 2-(L-cysteinylamino)-2-deoxy-alpha-D-glucopyranoside contacts are provided by Glu198, Lys261, and Glu277. Acetyl-CoA contacts are provided by residues 281–283 (VCL) and 288–294 (RGRGLGQ). Tyr315 is a binding site for 1D-myo-inositol 2-(L-cysteinylamino)-2-deoxy-alpha-D-glucopyranoside.

It belongs to the acetyltransferase family. MshD subfamily. In terms of assembly, monomer.

It carries out the reaction 1D-myo-inositol 2-(L-cysteinylamino)-2-deoxy-alpha-D-glucopyranoside + acetyl-CoA = mycothiol + CoA + H(+). Its function is as follows. Catalyzes the transfer of acetyl from acetyl-CoA to desacetylmycothiol (Cys-GlcN-Ins) to form mycothiol. The chain is Mycothiol acetyltransferase from Corynebacterium jeikeium (strain K411).